Reading from the N-terminus, the 122-residue chain is Proteasome assembly chaperone 3 (122 aa).

The residue at position 1 (M1) is an N-acetylmethionine.

The protein belongs to the PSMG3 family. Homodimer. Interacts directly with alpha and beta subunits of the 20S proteasome but dissociates before the formation of half-proteasomes, probably upon recruitment of POMP. Interacts with PSMG4.

Chaperone protein which promotes assembly of the 20S proteasome. May cooperate with PSMG1-PSMG2 heterodimers to orchestrate the correct assembly of proteasomes. The protein is Proteasome assembly chaperone 3 (Psmg3) of Mus musculus (Mouse).